The primary structure comprises 340 residues: Phenylalanine--tRNA ligase alpha subunit (340 aa).

Glu255 contributes to the Mg(2+) binding site.

The protein belongs to the class-II aminoacyl-tRNA synthetase family. Phe-tRNA synthetase alpha subunit type 1 subfamily. In terms of assembly, tetramer of two alpha and two beta subunits. Mg(2+) serves as cofactor.

The protein resides in the cytoplasm. It carries out the reaction tRNA(Phe) + L-phenylalanine + ATP = L-phenylalanyl-tRNA(Phe) + AMP + diphosphate + H(+). This Desulforamulus reducens (strain ATCC BAA-1160 / DSM 100696 / MI-1) (Desulfotomaculum reducens) protein is Phenylalanine--tRNA ligase alpha subunit.